The chain runs to 169 residues: Succinate dehydrogenase cytochrome b560 subunit, mitochondrial (169 aa).

Residues 1–29 (MAALLLRHVGRHCLRAHFSPQLCIRNAVP) constitute a mitochondrion transit peptide. Over 30–65 (LGTTAKEEMERFWNKNIGSNRPLSPHITIYSWSLPM) the chain is Mitochondrial matrix. Residues 66 to 90 (AMSICHRGTGIALSAGVSLFGMSAL) form a helical membrane-spanning segment. The Mitochondrial intermembrane portion of the chain corresponds to 91 to 110 (LLPGNFESYLELVKSLCLGP). The helical transmembrane segment at 111–139 (ALIHTAKFALVFPLMYHTWNGIRHLMWDL) threads the bilayer. His-127 is a heme b binding site. Topologically, residues 140-146 (GKGLKIP) are mitochondrial matrix. A helical transmembrane segment spans residues 147 to 167 (QLYQSGVVVLVLTVLSSMGLA). Residues 168-169 (AM) lie on the Mitochondrial intermembrane side of the membrane.

It belongs to the cytochrome b560 family. As to quaternary structure, component of complex II composed of four subunits: the flavoprotein (FP) SDHA, iron-sulfur protein (IP) SDHB, and a cytochrome b560 composed of SDHC and SDHD. It depends on heme b as a cofactor.

Its subcellular location is the mitochondrion inner membrane. The protein operates within carbohydrate metabolism; tricarboxylic acid cycle. Its function is as follows. Membrane-anchoring subunit of succinate dehydrogenase (SDH) that is involved in complex II of the mitochondrial electron transport chain and is responsible for transferring electrons from succinate to ubiquinone (coenzyme Q). SDH also oxidizes malate to the non-canonical enol form of oxaloacetate, enol-oxaloacetate. Enol-oxaloacetate, which is a potent inhibitor of the succinate dehydrogenase activity, is further isomerized into keto-oxaloacetate. This chain is Succinate dehydrogenase cytochrome b560 subunit, mitochondrial (SDHC), found in Homo sapiens (Human).